A 289-amino-acid chain; its full sequence is Bis(5'-nucleosyl)-tetraphosphatase, symmetrical (289 aa).

The protein belongs to the Ap4A hydrolase family.

It carries out the reaction P(1),P(4)-bis(5'-adenosyl) tetraphosphate + H2O = 2 ADP + 2 H(+). In terms of biological role, hydrolyzes diadenosine 5',5'''-P1,P4-tetraphosphate to yield ADP. This Pseudomonas fluorescens (strain ATCC BAA-477 / NRRL B-23932 / Pf-5) protein is Bis(5'-nucleosyl)-tetraphosphatase, symmetrical.